Consider the following 168-residue polypeptide: NADH-quinone oxidoreductase subunit E 2 (168 aa).

[2Fe-2S] cluster is bound by residues cysteine 77, cysteine 82, cysteine 118, and cysteine 122.

The protein belongs to the complex I 24 kDa subunit family. [2Fe-2S] cluster is required as a cofactor.

It carries out the reaction a quinone + NADH + 5 H(+)(in) = a quinol + NAD(+) + 4 H(+)(out). Functionally, NDH-1 shuttles electrons from NADH, via FMN and iron-sulfur (Fe-S) centers, to quinones in the respiratory chain. The immediate electron acceptor for the enzyme in this species is believed to be ubiquinone. Couples the redox reaction to proton translocation (for every two electrons transferred, four hydrogen ions are translocated across the cytoplasmic membrane), and thus conserves the redox energy in a proton gradient. The sequence is that of NADH-quinone oxidoreductase subunit E 2 (nuoE2) from Rhizobium meliloti (strain 1021) (Ensifer meliloti).